Here is a 275-residue protein sequence, read N- to C-terminus: Glutamate 5-kinase (275 aa).

Position 17 (K17) interacts with ATP. Residues S57, D144, and N160 each contribute to the substrate site. ATP contacts are provided by residues S180–D181 and T222–K228.

It belongs to the glutamate 5-kinase family.

It localises to the cytoplasm. It catalyses the reaction L-glutamate + ATP = L-glutamyl 5-phosphate + ADP. It participates in amino-acid biosynthesis; L-proline biosynthesis; L-glutamate 5-semialdehyde from L-glutamate: step 1/2. Its function is as follows. Catalyzes the transfer of a phosphate group to glutamate to form L-glutamate 5-phosphate. This chain is Glutamate 5-kinase, found in Streptococcus pyogenes serotype M12 (strain MGAS2096).